The primary structure comprises 457 residues: Acetylcholine receptor subunit alpha-1-B (457 aa).

The signal sequence occupies residues 1-20 (MDYTASCLIFLFIAAGTVFG). Residues 21–230 (TDHETRLIGD…ITYHFVLQRL (210 aa)) are Extracellular-facing. Intrachain disulfides connect cysteine 148–cysteine 162 and cysteine 212–cysteine 213. Asparagine 161 carries an N-linked (GlcNAc...) asparagine glycan. 3 helical membrane passes run 231–255 (PLYFIVNVIIPCLLFSFLTGLVFYL), 263–281 (MTLSISVLLSLTVFLLVIV), and 297–316 (YMLFTMVFVIASIIITVIVI). Residues 317 to 428 (NTHHRSPSTH…WKFVAMVLDH (112 aa)) are Cytoplasmic-facing. Residues 429-447 (ILLAVFMTVCVIGTLAVFA) traverse the membrane as a helical segment.

It belongs to the ligand-gated ion channel (TC 1.A.9) family. Acetylcholine receptor (TC 1.A.9.1) subfamily. Alpha-1/CHRNA1 sub-subfamily. As to quaternary structure, one of the alpha chains that assemble within the acetylcholine receptor, a pentamer of two alpha chains, a beta, a delta, and a gamma or epsilon chains.

It localises to the postsynaptic cell membrane. Its subcellular location is the cell membrane. It catalyses the reaction K(+)(in) = K(+)(out). It carries out the reaction Na(+)(in) = Na(+)(out). Functionally, upon acetylcholine binding, the AChR responds by an extensive change in conformation that affects all subunits and leads to opening of an ion-conducting channel across the plasma membrane. The polypeptide is Acetylcholine receptor subunit alpha-1-B (chrna1-b) (Xenopus laevis (African clawed frog)).